A 622-amino-acid polypeptide reads, in one-letter code: Peptidoglycan O-acetyltransferase OatA (622 aa).

11 helical membrane passes run 11–31, 39–59, 81–101, 143–163, 173–193, 212–232, 237–257, 267–287, 307–327, 334–354, and 387–407; these read YVPS…AYHL, GFIG…NILL, LIPA…FFHP, LWSL…LLVF, LLKI…ILYV, LLSG…PVVP, AVLN…TAFV, GGLL…SHPA, YGIY…LEIT, AILQ…FIET, and IAGV…VLSV. Residues 412-467 are disordered; that stretch reads EKQQTSVKTTTSTPDEKKDDKKEDKATKDKEADSNKASEQKETQKPDNKNKSAATP. Low complexity predominate over residues 413–424; that stretch reads KQQTSVKTTTST. Positions 425–461 are enriched in basic and acidic residues; sequence PDEKKDDKKEDKATKDKEADSNKASEQKETQKPDNKN. Catalysis depends on residues Ser-480, Asp-600, and His-603.

The protein belongs to the acyltransferase 3 family.

Its subcellular location is the cell membrane. The protein localises to the secreted. The protein resides in the cell wall. Functionally, responsible for O-acetylation at the C6-hydroxyl group of N-acetylmuramyl residues, forming the corresponding N,6-O-diacetylmuramic acid of the peptidoglycan. O-acetylation of the peptidoglycan is the major determinant for lysozyme resistance. Critical for virulence and escape from innate immune response of the host. Involved at both early and later stages of listeriosis in the mouse model of infection. Required for successful host colonization and for intracellular survival of bacteria in macrophages of the infected host. Controls the production of inflammatory mediators in the liver of the infected host. Confers resistance to host antimicrobial molecules and to cell wall-targeting molecules such as beta-lactam antibiotics and bacteriocins. The polypeptide is Peptidoglycan O-acetyltransferase OatA (Listeria monocytogenes serovar 1/2a (strain ATCC BAA-679 / EGD-e)).